The primary structure comprises 510 residues: MNVVPILLLILDGYGLAPDSTGNAAKLAFTPNIDRMLAMSGGTQIHASGRAVGLPDGYMGNSEVGHLNIGAGRVVYQQMTRIDVAIENKELDSNPILLDLFTKVKSSNGRLHLLGLLSNGGVHSHIRHLEALLSIAKEHNIQVILHPFMDGRDTGPKDGLKFMKEIVSFLTSTSSGVIGSFCGRFYAMDRDKRWERIKLAWDAIVHGVGLHVEDSVKALEQAYASGETDEFIKPRVMGNSSVNCVQDNDAVLFFNFRADRARELVSAFILPDFNGFDRGRVPHLSGIATMTMYDKEFNIPVLFNHENITKTLGEVVSALGLLQLRIAETEKYAHVTYFFSGGREEVFTGEERILVQSPRDVATYDLKPEMSVMEVTDRLLTAWNSKKFSLIVCNLANPDMVGHTGNIKASISALEAVDNCVGRIEKAVAEQHGCFILTADHGNVEEMLDKSGQPQTAHSCNPVPLIAIYDGKPLNLKESGKLGDIAPTILSIWDVSIPNEMTGNNLLSSE.

Residues D12 and S62 each contribute to the Mn(2+) site. S62 serves as the catalytic Phosphoserine intermediate. Residues H123, R152–D153, R184, R190, R257–R260, and K331 each bind substrate. Mn(2+) contacts are provided by D399, H403, D440, H441, and H458.

It belongs to the BPG-independent phosphoglycerate mutase family. As to quaternary structure, monomer. It depends on Mn(2+) as a cofactor.

The catalysed reaction is (2R)-2-phosphoglycerate = (2R)-3-phosphoglycerate. The protein operates within carbohydrate degradation; glycolysis; pyruvate from D-glyceraldehyde 3-phosphate: step 3/5. In terms of biological role, catalyzes the interconversion of 2-phosphoglycerate and 3-phosphoglycerate. This Lawsonia intracellularis (strain PHE/MN1-00) protein is 2,3-bisphosphoglycerate-independent phosphoglycerate mutase.